The primary structure comprises 48 residues: MVKKTIAAIFSVLVLSTVLTACNTTRGVGEDISDGGNAISGAATKAQQ.

An N-terminal signal peptide occupies residues 1-21; it reads MVKKTIAAIFSVLVLSTVLTA. A lipid anchor (N-palmitoyl cysteine) is attached at Cys22. Cys22 carries the S-diacylglycerol cysteine lipid modification.

It belongs to the EcnA/EcnB lipoprotein family.

It is found in the cell membrane. Plays a role in the bacteriolysis. Is activated under conditions of high osmolarity by the factor sigma S. Entericidin A functions as an antidote. The protein is Entericidin B (ecnB) of Escherichia coli O157:H7.